A 253-amino-acid chain; its full sequence is 5'-nucleotidase SurE (253 aa).

Positions 8, 9, 39, and 92 each coordinate a divalent metal cation.

It belongs to the SurE nucleotidase family. Requires a divalent metal cation as cofactor.

Its subcellular location is the cytoplasm. The catalysed reaction is a ribonucleoside 5'-phosphate + H2O = a ribonucleoside + phosphate. In terms of biological role, nucleotidase that shows phosphatase activity on nucleoside 5'-monophosphates. The protein is 5'-nucleotidase SurE of Burkholderia pseudomallei (strain 668).